The following is a 371-amino-acid chain: 43 kDa relaxation protein (371 aa).

Disordered regions lie at residues 1 to 46 (MASY…GNMP), 150 to 172 (KEPD…AKNT), 196 to 221 (RVDS…GQVQ), 263 to 291 (SERD…FDFE), and 328 to 371 (IHQE…SFSR). Residues 22-42 (YIAREGKYAREKDSDLEHKES) show a composition bias toward basic and acidic residues. Residues 157 to 168 (QKRHVSGKHRPN) are compositionally biased toward basic residues. Residues 196 to 215 (RVDSRSLKAQGIDREPERHL) show a composition bias toward basic and acidic residues. Over residues 330–365 (QEMERQRERERLAEKQRQQEKERQRLAEQIRQKPDK) the composition is skewed to basic and acidic residues.

It belongs to the MobA/MobL family.

Functionally, this protein is probably required for relaxation complex formation. In Salmonella typhimurium, this protein is 43 kDa relaxation protein.